A 323-amino-acid polypeptide reads, in one-letter code: L-lactate dehydrogenase (323 aa).

Residues Val12, Asp33, and Tyr65 each contribute to the NAD(+) site. Residues Arg94 and 126–129 (NPCD) contribute to the substrate site. Thr149 contacts NAD(+). 154-157 (ETMR) lines the substrate pocket. The Proton acceptor role is filled by His181. Thr234 contacts substrate.

The protein belongs to the LDH/MDH superfamily. LDH family. In terms of assembly, homotetramer.

It localises to the cytoplasm. The enzyme catalyses (S)-lactate + NAD(+) = pyruvate + NADH + H(+). It participates in fermentation; pyruvate fermentation to lactate; (S)-lactate from pyruvate: step 1/1. In terms of biological role, catalyzes the conversion of lactate to pyruvate. The protein is L-lactate dehydrogenase of Mycoplasmoides gallisepticum (strain R(low / passage 15 / clone 2)) (Mycoplasma gallisepticum).